The primary structure comprises 89 residues: MRPIIAILIALFILLQYQLWFAAGGIVSVHHLNENINHQIMENQKLKDRNTALLADIDDLKHGAEAIEEHARNDLGMIKKNEVFYQIVK.

Residues Met-1–Pro-3 lie on the Cytoplasmic side of the membrane. The helical transmembrane segment at Ile-4–Phe-21 threads the bilayer. Topologically, residues Ala-22–Lys-89 are periplasmic. A coiled-coil region spans residues Val-29–His-62.

The protein belongs to the FtsB family. In terms of assembly, part of a complex composed of FtsB, FtsL and FtsQ.

It is found in the cell inner membrane. Its function is as follows. Essential cell division protein. May link together the upstream cell division proteins, which are predominantly cytoplasmic, with the downstream cell division proteins, which are predominantly periplasmic. In Coxiella burnetii (strain RSA 493 / Nine Mile phase I), this protein is Cell division protein FtsB.